The sequence spans 88 residues: Platelet factor 4 (88 aa).

Residue threonine 7 is glycosylated (O-linked (GalNAc...) threonine). 2 cysteine pairs are disulfide-bonded: cysteine 25–cysteine 51 and cysteine 27–cysteine 67. The residue at position 41 (serine 41) is a Phosphoserine. 76 to 82 (KKILKKL) is a heparin binding site.

It belongs to the intercrine alpha (chemokine CxC) family. As to quaternary structure, homotetramer. Interacts with TNFAIP6 (via Link domain). Interacts with CCR1. Interacts with CXCR3. Interacts with THBD; this interaction enhances generation of activated protein C. In terms of processing, O-linked glycan consists of Gal-GalNAc disaccharide which is modified with sialic acid residues (microheterogeneity).

Its subcellular location is the secreted. Functionally, chemokine released during platelet aggregation that plays a role in different biological processes including hematopoiesis, cell proliferation, differentiation, and activation. Acts via different functional receptors including CCR1, CXCR3A or CXCR3B. Upon interaction with CXCR3A receptor, induces activated T-lymphocytes migration mediated via downstream Ras/extracellular signal-regulated kinase (ERK) signaling. Neutralizes the anticoagulant effect of heparin by binding more strongly to heparin than to the chondroitin-4-sulfate chains of the carrier molecule. Plays a role in the inhibition of hematopoiesis and in the maintenance of hematopoietic stem cell (HSC) quiescence. Chemotactic for neutrophils and monocytes via CCR1. Inhibits endothelial cell proliferation. In cooperation with toll-like receptor 8/TLR8, induces chromatin remodeling and activates inflammatory gene expression via the TBK1-IRF5 axis. In addition, induces myofibroblast differentiation and collagen synthesis in different precursor cells, including endothelial cells, by stimulating endothelial-to-mesenchymal transition. Interacts with thrombomodulin/THBD to enhance the activation of protein C and thus potentiates its anticoagulant activity. In Bos taurus (Bovine), this protein is Platelet factor 4 (PF4).